We begin with the raw amino-acid sequence, 298 residues long: N-acetylmuramic acid 6-phosphate etherase (298 aa).

In terms of domain architecture, SIS spans 55–218; sequence IHAQVSGGGR…STGLMIKSGK (164 aa). The active-site Proton donor is the glutamate 83. Glutamate 114 is a catalytic residue.

Belongs to the GCKR-like family. MurNAc-6-P etherase subfamily. As to quaternary structure, homodimer.

It carries out the reaction N-acetyl-D-muramate 6-phosphate + H2O = N-acetyl-D-glucosamine 6-phosphate + (R)-lactate. It functions in the pathway amino-sugar metabolism; 1,6-anhydro-N-acetylmuramate degradation. The protein operates within amino-sugar metabolism; N-acetylmuramate degradation. It participates in cell wall biogenesis; peptidoglycan recycling. In terms of biological role, specifically catalyzes the cleavage of the D-lactyl ether substituent of MurNAc 6-phosphate, producing GlcNAc 6-phosphate and D-lactate. Together with AnmK, is also required for the utilization of anhydro-N-acetylmuramic acid (anhMurNAc) either imported from the medium or derived from its own cell wall murein, and thus plays a role in cell wall recycling. The chain is N-acetylmuramic acid 6-phosphate etherase from Shigella flexneri serotype 5b (strain 8401).